We begin with the raw amino-acid sequence, 1328 residues long: Mitogen-activated protein kinase kinase kinase 19 (1328 aa).

Basic and acidic residues predominate over residues 1 to 19 (MSSMPKPERHAESLLDICH). Disordered regions lie at residues 1–28 (MSSM…PTDL), 44–74 (RSEE…QDWQ), 344–380 (VREE…AKNY), and 524–561 (QEND…GPIK). Residues 344–361 (VREEDIDCHGSKTRKPEE) show a composition bias toward basic and acidic residues. Polar residues predominate over residues 364–377 (SQYLSSRKNESSVA). The segment covering 524-542 (QENDKHKMNSHRSKLDSKT) has biased composition (basic and acidic residues). One can recognise a Protein kinase domain in the interval 1061–1324 (WTKGEILGKG…ALQLLKHSFL (264 aa)). ATP-binding positions include 1067–1075 (LGKGAYGTV) and lysine 1089. The Proton acceptor role is filled by aspartate 1186.

It belongs to the protein kinase superfamily. STE Ser/Thr protein kinase family. STE20 subfamily.

It catalyses the reaction L-seryl-[protein] + ATP = O-phospho-L-seryl-[protein] + ADP + H(+). It carries out the reaction L-threonyl-[protein] + ATP = O-phospho-L-threonyl-[protein] + ADP + H(+). This is Mitogen-activated protein kinase kinase kinase 19 (MAP3K19) from Homo sapiens (Human).